The primary structure comprises 354 residues: Uroporphyrinogen decarboxylase (354 aa).

Substrate-binding positions include 27 to 31, D77, Y154, T209, and H327; that span reads RQAGR.

The protein belongs to the uroporphyrinogen decarboxylase family. Homodimer.

The protein localises to the cytoplasm. It catalyses the reaction uroporphyrinogen III + 4 H(+) = coproporphyrinogen III + 4 CO2. It participates in porphyrin-containing compound metabolism; protoporphyrin-IX biosynthesis; coproporphyrinogen-III from 5-aminolevulinate: step 4/4. Functionally, catalyzes the decarboxylation of four acetate groups of uroporphyrinogen-III to yield coproporphyrinogen-III. The sequence is that of Uroporphyrinogen decarboxylase from Salmonella paratyphi B (strain ATCC BAA-1250 / SPB7).